The chain runs to 267 residues: NAD kinase (267 aa).

Asp-45 (proton acceptor) is an active-site residue. NAD(+)-binding positions include Asp-45–Gly-46, Asn-121–Glu-122, Lys-147, Asp-149, Thr-160–Ser-165, and Ala-184.

Belongs to the NAD kinase family. Requires a divalent metal cation as cofactor.

Its subcellular location is the cytoplasm. The catalysed reaction is NAD(+) + ATP = ADP + NADP(+) + H(+). In terms of biological role, involved in the regulation of the intracellular balance of NAD and NADP, and is a key enzyme in the biosynthesis of NADP. Catalyzes specifically the phosphorylation on 2'-hydroxyl of the adenosine moiety of NAD to yield NADP. This Lactobacillus gasseri (strain ATCC 33323 / DSM 20243 / BCRC 14619 / CIP 102991 / JCM 1131 / KCTC 3163 / NCIMB 11718 / NCTC 13722 / AM63) protein is NAD kinase.